Consider the following 334-residue polypeptide: Ornithine carbamoyltransferase (334 aa).

Residues S57–T60, Q84, R108, and H135–Q138 each bind carbamoyl phosphate. Residues N169, D233, and S237–M238 contribute to the L-ornithine site. Carbamoyl phosphate is bound by residues C275–L276 and R320.

This sequence belongs to the aspartate/ornithine carbamoyltransferase superfamily. OTCase family.

The protein localises to the cytoplasm. It catalyses the reaction carbamoyl phosphate + L-ornithine = L-citrulline + phosphate + H(+). Its pathway is amino-acid biosynthesis; L-arginine biosynthesis; L-arginine from L-ornithine and carbamoyl phosphate: step 1/3. Its function is as follows. Reversibly catalyzes the transfer of the carbamoyl group from carbamoyl phosphate (CP) to the N(epsilon) atom of ornithine (ORN) to produce L-citrulline. This Aeromonas salmonicida (strain A449) protein is Ornithine carbamoyltransferase.